Consider the following 338-residue polypeptide: Secretory carrier-associated membrane protein 1 (338 aa).

Residues 1–64 (MSDFDSNPFA…NVPNTQPAIM (64 aa)) are disordered. Ser2 bears the N-acetylserine mark. Ser2 carries the phosphoserine modification. Over 2-155 (SDFDSNPFAD…QKTVKLMYYL (154 aa)) the chain is Cytoplasmic. Position 45 is a phosphothreonine (Thr45). Residues 156–176 (WMFHAVTLFLNIFGCLAWFCV) form a helical membrane-spanning segment. Residues 177-181 (DSARA) lie on the Lumenal side of the membrane. A helical membrane pass occupies residues 182–202 (VDFGLSILWFLLFTPCSFVCW). Over 203–218 (YRPLYGAFRSDSSFRF) the chain is Cytoplasmic. The chain crosses the membrane as a helical span at residues 219–239 (FVFFFVYICQFAVHVLQAAGF). The Lumenal portion of the chain corresponds to 240-261 (HNWGNCGWISSLTGLNQNIPVG). Residues 262-282 (IMMIIIAALFTASAVISLVMF) form a helical membrane-spanning segment. Over 283–338 (KKVHGLYRTTGASFEKAQQEFATGVMSNKTVQTAAANAASTAASSAAQNAFKGNQI) the chain is Cytoplasmic.

This sequence belongs to the SCAMP family. In terms of assembly, interacts with SYNRG and ITSN1. Interacts with SLC9A7. As to expression, widely expressed, with highest expression in brain.

The protein resides in the golgi apparatus. The protein localises to the trans-Golgi network membrane. It localises to the recycling endosome membrane. Its function is as follows. Functions in post-Golgi recycling pathways. Acts as a recycling carrier to the cell surface. This is Secretory carrier-associated membrane protein 1 (SCAMP1) from Homo sapiens (Human).